A 498-amino-acid polypeptide reads, in one-letter code: Cytochrome P450 monooxygenase idtP (498 aa).

A signal peptide spans 1 to 20 (MFLLHILAIGACLLWYFVRS). A heme-binding site is contributed by Cys-439.

The protein belongs to the cytochrome P450 family. Heme is required as a cofactor.

It participates in secondary metabolite biosynthesis. Its function is as follows. Cytochrome P450 monooxygenase; part of the gene cluster that mediates the biosynthesis of paspalitrems, indole-diterpene (IDT) mycotoxins that are potent tremorgens in mammals. The geranylgeranyl diphosphate (GGPP) synthase idtG is proposed to catalyze the first step in IDT biosynthesis via catalysis of a series of iterative condensations of isopentenyl diphosphate (IPP) with dimethylallyl diphosphate (DMAPP), geranyl diphosphate (GPP), and farnesyl diphosphate (FPP), to form GGPP. Condensation of indole-3-glycerol phosphate with GGPP by the prenyltransferase idtC then forms 3-geranylgeranylindole (3-GGI). Epoxidation of the two terminal alkenes of the geranylgeranyl moiety by the FAD-dependent monooxygenase idtM, and cyclization by the terpene cyclase idtB then leads to the production of paspaline. The cytochrome P450 monooxygenase idtP then catalyzes oxidative elimination of the pendant methyl group at C-12 of paspaline and generates the C-10 ketone to yield 13-desoxypaxilline. The cytochrome P450 monooxygenase idtQ may catalyze the C-13 oxidation of 13-desoxypaxilline to afford paxilline. Considering that both paspalicine and paxilline were detected in C.paspali, idtQ also catalyzes the formation of paspalinine from 13-desoxypaxilline via paspalicine as an intermediate. Finally, the alpha-prenyltransferase idtF prenylates paspalinine at the C-20 or the C-21 positions to yield paspalitrems A and C, respectively. The hydroxylation of paspalitrem A at C-32 by a still unknown oxidase affords paspalitrem B. The protein is Cytochrome P450 monooxygenase idtP of Claviceps paspali (Rye ergot fungus).